Reading from the N-terminus, the 637-residue chain is ATP-dependent zinc metalloprotease FtsH (637 aa).

The Cytoplasmic segment spans residues 1 to 7; that stretch reads MNRVFRN. Residues 8–28 form a helical membrane-spanning segment; sequence TIFYLLILLVVIGVVSYFQTS. At 29-109 the chain is on the extracellular side; it reads NPKTENMSYS…VEPAQETSGW (81 aa). The helical transmembrane segment at 110 to 130 threads the bilayer; that stretch reads VTFLTTIIPFVIIFILFFFLL. Over 131-637 the chain is Cytoplasmic; sequence NQAQGGGSRV…TEEKKDDTKE (507 aa). 201–208 contributes to the ATP binding site; that stretch reads GPPGTGKT. Residue His-423 participates in Zn(2+) binding. The active site involves Glu-424. 2 residues coordinate Zn(2+): His-427 and Asp-499. Positions 514 to 637 are not necessary for FtsH function; it reads FGMSEKLGPL…TEEKKDDTKE (124 aa).

This sequence in the central section; belongs to the AAA ATPase family. In the C-terminal section; belongs to the peptidase M41 family. As to quaternary structure, homohexamer. Interacts with FloT at midcell. Interacts with FloA at midcell. Another study shows only minor colocalization with FloA or FloT. It depends on Zn(2+) as a cofactor.

It is found in the cell membrane. The protein localises to the membrane raft. In terms of biological role, acts as a processive, ATP-dependent zinc metallopeptidase for both cytoplasmic and membrane proteins. Plays a role in the quality control of integral membrane proteins. Functionally, in vitro partially degrades Spo0E, the phosphatase that acts on Spo0A-P. Recognition requires the last 14 residues of Spo0E. Its stabile accumulation requires FlotA and Flot. May degrade EzrA. This is ATP-dependent zinc metalloprotease FtsH from Bacillus subtilis (strain 168).